The chain runs to 283 residues: ATP synthase gamma chain (283 aa).

The protein belongs to the ATPase gamma chain family. As to quaternary structure, F-type ATPases have 2 components, CF(1) - the catalytic core - and CF(0) - the membrane proton channel. CF(1) has five subunits: alpha(3), beta(3), gamma(1), delta(1), epsilon(1). CF(0) has three main subunits: a, b and c.

The protein resides in the cell inner membrane. Functionally, produces ATP from ADP in the presence of a proton gradient across the membrane. The gamma chain is believed to be important in regulating ATPase activity and the flow of protons through the CF(0) complex. In Ehrlichia ruminantium (strain Welgevonden), this protein is ATP synthase gamma chain.